Consider the following 154-residue polypeptide: UPF0178 protein Glov_0658 (154 aa).

This sequence belongs to the UPF0178 family.

In Trichlorobacter lovleyi (strain ATCC BAA-1151 / DSM 17278 / SZ) (Geobacter lovleyi), this protein is UPF0178 protein Glov_0658.